The following is a 219-amino-acid chain: Octanoyltransferase (219 aa).

In terms of domain architecture, BPL/LPL catalytic spans 24 to 212 (KFRRECILFL…NLNSFLGPIS (189 aa)). Residues 69 to 76 (RGGDFTAH), 140 to 142 (SIG), and 153 to 155 (GVA) each bind substrate. Cys171 (acyl-thioester intermediate) is an active-site residue.

It belongs to the LipB family.

The protein resides in the cytoplasm. The enzyme catalyses octanoyl-[ACP] + L-lysyl-[protein] = N(6)-octanoyl-L-lysyl-[protein] + holo-[ACP] + H(+). It participates in protein modification; protein lipoylation via endogenous pathway; protein N(6)-(lipoyl)lysine from octanoyl-[acyl-carrier-protein]: step 1/2. Its function is as follows. Catalyzes the transfer of endogenously produced octanoic acid from octanoyl-acyl-carrier-protein onto the lipoyl domains of lipoate-dependent enzymes. Lipoyl-ACP can also act as a substrate although octanoyl-ACP is likely to be the physiological substrate. The polypeptide is Octanoyltransferase (Leptospira borgpetersenii serovar Hardjo-bovis (strain JB197)).